The primary structure comprises 141 residues: Hemoglobin subunit alpha (141 aa).

One can recognise a Globin domain in the interval 1 to 141 (VLSSTDKSNV…VSTVLTSKYR (141 aa)). At Ser-3 the chain carries Phosphoserine. N6-succinyllysine occurs at positions 7 and 11. N6-acetyllysine; alternate is present on Lys-16. The residue at position 16 (Lys-16) is an N6-succinyllysine; alternate. Tyr-24 carries the phosphotyrosine modification. Ser-35 is subject to Phosphoserine. Lys-40 bears the N6-succinyllysine mark. His-58 is an O2 binding site. A heme b-binding site is contributed by His-87. Ser-102 carries the phosphoserine modification. Residue Thr-108 is modified to Phosphothreonine. Phosphoserine is present on residues Ser-124 and Ser-131. Residues Thr-134 and Thr-137 each carry the phosphothreonine modification. A Phosphoserine modification is found at Ser-138.

Belongs to the globin family. As to quaternary structure, heterotetramer of two alpha chains and two beta chains. As to expression, red blood cells.

In terms of biological role, involved in oxygen transport from the lung to the various peripheral tissues. Hemopressin acts as an antagonist peptide of the cannabinoid receptor CNR1. Hemopressin-binding efficiently blocks cannabinoid receptor CNR1 and subsequent signaling. The sequence is that of Hemoglobin subunit alpha (HBA) from Pteropus alecto (Black flying fox).